We begin with the raw amino-acid sequence, 284 residues long: 2-dehydro-3-deoxyphosphooctonate aldolase (284 aa).

It belongs to the KdsA family.

It localises to the cytoplasm. It carries out the reaction D-arabinose 5-phosphate + phosphoenolpyruvate + H2O = 3-deoxy-alpha-D-manno-2-octulosonate-8-phosphate + phosphate. It functions in the pathway carbohydrate biosynthesis; 3-deoxy-D-manno-octulosonate biosynthesis; 3-deoxy-D-manno-octulosonate from D-ribulose 5-phosphate: step 2/3. Its pathway is bacterial outer membrane biogenesis; lipopolysaccharide biosynthesis. The protein is 2-dehydro-3-deoxyphosphooctonate aldolase of Cronobacter sakazakii (strain ATCC BAA-894) (Enterobacter sakazakii).